Here is a 146-residue protein sequence, read N- to C-terminus: MSYLVCGMIEYLMEQRSDIEADLKSIGYEVGIKLLELCNFEREVRISTLLYRATFDLLSLVSDSDRRVEKARDVDRTYLLTDSDGLFSRFISVPDEWNGLSADSIVCGMIQAALMASGYDSEVTAFPEPSENLPNRVIFQIRILDL.

Belongs to the TRAPP small subunits family. BET3 subfamily. Part of the multisubunit TRAPP (transport protein particle) complex.

The protein localises to the golgi apparatus. It is found in the cis-Golgi network. It localises to the endoplasmic reticulum. May play a role in vesicular transport from endoplasmic reticulum to Golgi. The sequence is that of Putative trafficking protein particle complex subunit TRS31 (TRS31) from Encephalitozoon cuniculi (strain GB-M1) (Microsporidian parasite).